Consider the following 137-residue polypeptide: ATP synthase epsilon chain (137 aa).

It belongs to the ATPase epsilon chain family. F-type ATPases have 2 components, CF(1) - the catalytic core - and CF(0) - the membrane proton channel. CF(1) has five subunits: alpha(3), beta(3), gamma(1), delta(1), epsilon(1). CF(0) has three main subunits: a, b and c.

It is found in the cell inner membrane. Produces ATP from ADP in the presence of a proton gradient across the membrane. This is ATP synthase epsilon chain from Pseudoalteromonas atlantica (strain T6c / ATCC BAA-1087).